The sequence spans 105 residues: MTKSLEEFKKLVDAEEYFKFFELDYDAKIVNVNRLHILKKFSQLISEIDTNYPDISAEEKLNQYSLALQSAYQVFLGSSPQEQKLFKVFKDKPKNVITLTELSSD.

It belongs to the NifW family. In terms of assembly, homotrimer; associates with NifD.

In terms of biological role, may protect the nitrogenase Fe-Mo protein from oxidative damage. In Trichormus variabilis (strain ATCC 29413 / PCC 7937) (Anabaena variabilis), this protein is Nitrogenase-stabilizing/protective protein NifW 1.